We begin with the raw amino-acid sequence, 622 residues long: Probable potassium transport system protein Kup (622 aa).

Transmembrane regions (helical) follow at residues 8–28 (LAALTLGAIGVVYGDIGTSVL), 50–70 (VLSVLFWTLTVIVSLKYVVLV), 100–120 (GWLLGLGIFGTSLFYGDGVIT), 137–157 (PHFGKAVIPLTLVVLFGLFAV), 169–189 (FGPVTLVWFFTIAALGVPHIV), 203–223 (ALGFILGNPGISFIILGAVVL), 247–267 (WFSVAMPALTINYFGQGALLL), 285–305 (ALVPLVVLATMATVIASQALI), 337–357 (IYLPFVNWSLFVAIVLAVVMF), 366–386 (AYGIAVTLDMLITTVLTFFVI), 392–412 (YPLALCVATTGFFFVVDLAFF), and 419–439 (LLQGGWFPLMIGGLVFTLMMT).

This sequence belongs to the HAK/KUP transporter (TC 2.A.72) family.

The protein resides in the cell inner membrane. It catalyses the reaction K(+)(in) + H(+)(in) = K(+)(out) + H(+)(out). Functionally, transport of potassium into the cell. Likely operates as a K(+):H(+) symporter. In Acidovorax ebreus (strain TPSY) (Diaphorobacter sp. (strain TPSY)), this protein is Probable potassium transport system protein Kup.